We begin with the raw amino-acid sequence, 374 residues long: Queuine tRNA-ribosyltransferase (374 aa).

Aspartate 94 serves as the catalytic Proton acceptor. Residues 94-98, aspartate 148, glutamine 191, and glycine 218 contribute to the substrate site; that span reads DSGGF. The RNA binding stretch occupies residues 249 to 255; it reads GVGSPDY. Catalysis depends on aspartate 268, which acts as the Nucleophile. The interval 273–277 is RNA binding; important for wobble base 34 recognition; the sequence is TRIGR. Residues cysteine 306, cysteine 308, cysteine 311, and histidine 337 each coordinate Zn(2+).

The protein belongs to the queuine tRNA-ribosyltransferase family. As to quaternary structure, homodimer. Within each dimer, one monomer is responsible for RNA recognition and catalysis, while the other monomer binds to the replacement base PreQ1. Zn(2+) serves as cofactor.

It catalyses the reaction 7-aminomethyl-7-carbaguanine + guanosine(34) in tRNA = 7-aminomethyl-7-carbaguanosine(34) in tRNA + guanine. It participates in tRNA modification; tRNA-queuosine biosynthesis. Catalyzes the base-exchange of a guanine (G) residue with the queuine precursor 7-aminomethyl-7-deazaguanine (PreQ1) at position 34 (anticodon wobble position) in tRNAs with GU(N) anticodons (tRNA-Asp, -Asn, -His and -Tyr). Catalysis occurs through a double-displacement mechanism. The nucleophile active site attacks the C1' of nucleotide 34 to detach the guanine base from the RNA, forming a covalent enzyme-RNA intermediate. The proton acceptor active site deprotonates the incoming PreQ1, allowing a nucleophilic attack on the C1' of the ribose to form the product. After dissociation, two additional enzymatic reactions on the tRNA convert PreQ1 to queuine (Q), resulting in the hypermodified nucleoside queuosine (7-(((4,5-cis-dihydroxy-2-cyclopenten-1-yl)amino)methyl)-7-deazaguanosine). The polypeptide is Queuine tRNA-ribosyltransferase (Acetivibrio thermocellus (strain ATCC 27405 / DSM 1237 / JCM 9322 / NBRC 103400 / NCIMB 10682 / NRRL B-4536 / VPI 7372) (Clostridium thermocellum)).